Here is a 493-residue protein sequence, read N- to C-terminus: Guanosine-5'-triphosphate,3'-diphosphate pyrophosphatase (493 aa).

It belongs to the GppA/Ppx family. GppA subfamily.

It catalyses the reaction guanosine 3'-diphosphate 5'-triphosphate + H2O = guanosine 3',5'-bis(diphosphate) + phosphate + H(+). It participates in purine metabolism; ppGpp biosynthesis; ppGpp from GTP: step 2/2. Catalyzes the conversion of pppGpp to ppGpp. Guanosine pentaphosphate (pppGpp) is a cytoplasmic signaling molecule which together with ppGpp controls the 'stringent response', an adaptive process that allows bacteria to respond to amino acid starvation, resulting in the coordinated regulation of numerous cellular activities. This Salmonella paratyphi A (strain ATCC 9150 / SARB42) protein is Guanosine-5'-triphosphate,3'-diphosphate pyrophosphatase.